Consider the following 568-residue polypeptide: MFS-type efflux transporter phmH (568 aa).

The span at 1-11 shows a compositional bias: polar residues; it reads MVSGTDTTEVG. Residues 1-39 are disordered; it reads MVSGTDTTEVGATTKAPPSEGTEGILDDHSSNSQPQAEK. 7 helical membrane passes run 45–65, 101–121, 134–154, 161–181, 199–219, 237–257, and 268–288; these read YPLS…VSAL, YVMI…GGSS, GIGA…LVPM, IGLL…VGGI, IFYI…LFLH, VIGN…LTYG, and IAAP…WEMS. An N-linked (GlcNAc...) asparagine glycan is attached at Asn303. Helical transmembrane passes span 307–327, 344–364, 372–392, 399–419, 437–457, and 515–535; these read AAAF…NFFY, VYTL…GAIV, TVHL…SILD, EWVI…STTL, TWSF…AAIF, and IGIV…EIHL. Asn563 carries an N-linked (GlcNAc...) asparagine glycan.

It belongs to the major facilitator superfamily.

The protein localises to the cell membrane. MFS-type efflux transporter; part of the gene cluster that mediates the biosynthesis of thethe mycotoxins phomacins, leucine-derived cytochalasans with potent actin polymerization-inhibitory activities and monocot-specific antigerminative activities. PhmH might be involved in the excretion of phomacins. The chain is MFS-type efflux transporter phmH from Phaeosphaeria nodorum (strain SN15 / ATCC MYA-4574 / FGSC 10173) (Glume blotch fungus).